The following is a 912-amino-acid chain: Type II beta methyltransferase M.BslI (912 aa).

This sequence belongs to the N(4)/N(6)-methyltransferase family. N(4) subfamily.

It carries out the reaction a 2'-deoxycytidine in DNA + S-adenosyl-L-methionine = an N(4)-methyl-2'-deoxycytidine in DNA + S-adenosyl-L-homocysteine + H(+). A beta subtype methylase. Recognizes the double-stranded sequence 5'-CCN(7)GG-3', methylates C-2 on both strands, and protects the DNA from cleavage by the BslI endonuclease. The protein is Type II beta methyltransferase M.BslI (bslIM) of Bacillus sp. (strain NEB-606).